The chain runs to 370 residues: Arginine kinase (370 aa).

One can recognise a Phosphagen kinase N-terminal domain in the interval 6 to 89 (QKKYPAKDDF…FDPVIEEYHN (84 aa)). Residues 115-358 (YVISSRVRTG…KVLIEMEKKL (244 aa)) form the Phosphagen kinase C-terminal domain. Residues 118–122 (SSRVR) and H181 contribute to the ATP site. E222 is a substrate binding site. Residue R226 participates in ATP binding. C274 serves as a coordination point for substrate. ATP contacts are provided by residues 283-287 (RCSVH) and 311-316 (RGTSGE). E316 is a substrate binding site.

This sequence belongs to the ATP:guanido phosphotransferase family. As to quaternary structure, homodimer. Post-translationally, the N-terminus is blocked.

It carries out the reaction L-arginine + ATP = N(omega)-phospho-L-arginine + ADP + H(+). This chain is Arginine kinase (AK), found in Stichopus japonicus (Sea cucumber).